A 103-amino-acid polypeptide reads, in one-letter code: Histone H4 type VIII (103 aa).

Positions 1–14 (MSGRGKGGKGLGKG) are enriched in gly residues. The segment at 1-20 (MSGRGKGGKGLGKGGAKRHR) is disordered. S2 is modified (N-acetylserine). S2 bears the Phosphoserine mark. Residue R4 is modified to Asymmetric dimethylarginine; by PRMT1; alternate. R4 carries the citrulline; alternate modification. R4 carries the omega-N-methylarginine; by PRMT1; alternate modification. The residue at position 4 (R4) is a Symmetric dimethylarginine; by PRMT5 and PRMT7; alternate. An N6-(2-hydroxyisobutyryl)lysine; alternate mark is found at K6, K9, K13, and K17. Residue K6 is modified to N6-acetyl-N6-methyllysine; alternate. An N6-acetyllysine mark is found at K6, K9, K13, and K17. N6-butyryllysine; alternate occurs at positions 6, 9, 13, and 17. Position 6 is an N6-glutaryllysine; alternate (K6). K6, K9, K13, and K17 each carry N6-lactoyllysine; alternate. K9 is subject to N6-propionyllysine; alternate. At K13 the chain carries N6-acetyl-N6-methyllysine; alternate. Position 13 is an N6-glutaryllysine; alternate (K13). K13 carries the post-translational modification N6-methyllysine; alternate. K17 carries the N6-propionyllysine; alternate modification. N6-methyllysine; alternate is present on K21. K21 carries the N6,N6,N6-trimethyllysine; alternate modification. N6,N6-dimethyllysine; alternate is present on K21. 2 positions are modified to N6-(2-hydroxyisobutyryl)lysine; alternate: K32 and K45. K32 carries the N6-acetyllysine modification. 2 positions are modified to N6-butyryllysine; alternate: K32 and K45. K32 bears the N6-glutaryllysine; alternate mark. Position 32 is an N6-lactoyllysine; alternate (K32). K32 and K45 each carry N6-propionyllysine; alternate. N6-succinyllysine; alternate is present on K32. A Glycyl lysine isopeptide (Lys-Gly) (interchain with G-Cter in UFM1); alternate cross-link involves residue K32. Phosphoserine is present on S48. Y52 is subject to Phosphotyrosine. An N6-acetyllysine modification is found at K60. Residues K60, K78, and K80 each carry the N6-glutaryllysine; alternate modification. Residue K60 is modified to N6-(2-hydroxyisobutyryl)lysine. K78 and K80 each carry N6-(2-hydroxyisobutyryl)lysine; alternate. 2 positions are modified to N6-butyryllysine; alternate: K78 and K80. The residue at position 78 (K78) is an N6-lactoyllysine; alternate. N6-propionyllysine; alternate is present on residues K78 and K80. K78 is modified (N6-succinyllysine). K80 bears the N6-acetyllysine mark. Phosphotyrosine is present on Y89. K92 is modified (N6-(2-hydroxyisobutyryl)lysine; alternate). K92 carries the post-translational modification N6-butyryllysine; alternate. K92 carries the N6-glutaryllysine; alternate modification. K92 carries the N6-lactoyllysine; alternate modification. Residue K92 is modified to N6-propionyllysine; alternate. Residue K92 is modified to N6-succinyllysine; alternate. An N6-acetyllysine; alternate modification is found at K92. Residue K92 forms a Glycyl lysine isopeptide (Lys-Gly) (interchain with G-Cter in ubiquitin); alternate linkage.

It belongs to the histone H4 family. As to quaternary structure, the nucleosome is a histone octamer containing two molecules each of H2A, H2B, H3 and H4 assembled in one H3-H4 heterotetramer and two H2A-H2B heterodimers. The octamer wraps approximately 147 bp of DNA. In terms of processing, acetylation at Lys-6 (H4K5ac), Lys-9 (H4K8ac), Lys-13 (H4K12ac) and Lys-17 (H4K16ac) occurs in coding regions of the genome but not in heterochromatin. Citrullination at Arg-4 (H4R3ci) by PADI4 impairs methylation. Post-translationally, monomethylation and asymmetric dimethylation at Arg-4 (H4R3me1 and H4R3me2a, respectively) by PRMT1 favors acetylation at Lys-9 (H4K8ac) and Lys-13 (H4K12ac). Demethylation is performed by JMJD6. Symmetric dimethylation on Arg-4 (H4R3me2s) by the PRDM1/PRMT5 complex may play a crucial role in the germ-cell lineage. In terms of processing, monomethylated, dimethylated or trimethylated at Lys-21 (H4K20me1, H4K20me2, H4K20me3). Monomethylation is performed by KMT5A/SET8. Trimethylation is performed by KMT5B and KMT5C and induces gene silencing. Monomethylated at Lys-13 (H4K12me1) by N6AMT1; H4K12me1 modification is present at the promoters of numerous genes encoding cell cycle regulators. Acetyl-methylated at Lys-6 and Lys-13 (H4K5acme and H4K12acme, respectively), acetyl-methylation is an epigenetic mark of active chromatin associated with increased transcriptional initiation. Acetyl-methylation is formed by acetylation by EP300/p300 of lysine residues that are already monomethylated on the same side chain. H4K5acme and H4K12acme marks specifically bind BRD2. Post-translationally, ubiquitinated by the CUL4-DDB-RBX1 complex in response to ultraviolet irradiation. This may weaken the interaction between histones and DNA and facilitate DNA accessibility to repair proteins. Monoubiquitinated at Lys-92 of histone H4 (H4K91ub1) in response to DNA damage. The exact role of H4K91ub1 in DNA damage response is still unclear but it may function as a licensing signal for additional histone H4 post-translational modifications such as H4 Lys-21 methylation (H4K20me). In terms of processing, sumoylated, which is associated with transcriptional repression. Butyrylation of histones marks active promoters and competes with histone acetylation. Post-translationally, glutarylation at Lys-92 (H4K91glu) destabilizes nucleosomes by promoting dissociation of the H2A-H2B dimers from nucleosomes. In terms of processing, ufmylated; monofmylated by UFL1 at Lys-32 (H4K31Ufm1) in response to DNA damage. Lactylated in macrophages by EP300/P300 by using lactoyl-CoA directly derived from endogenous or exogenous lactate, leading to stimulates gene transcription. Delactylated by SIRT3 at Lys-17 (H4K16la).

It localises to the nucleus. The protein resides in the chromosome. Its function is as follows. Core component of nucleosome. Nucleosomes wrap and compact DNA into chromatin, limiting DNA accessibility to the cellular machineries which require DNA as a template. Histones thereby play a central role in transcription regulation, DNA repair, DNA replication and chromosomal stability. DNA accessibility is regulated via a complex set of post-translational modifications of histones, also called histone code, and nucleosome remodeling. The sequence is that of Histone H4 type VIII (H4-VIII) from Gallus gallus (Chicken).